We begin with the raw amino-acid sequence, 520 residues long: MTIAITIISSLLFLIVGLVVGSLIFKSSTEKKLAAARGTAELIVEDAKKEAETTKKEALLEAKEENHRLRTEIENELRGRRTETQKAENRLLQREENLDRKDTSLSKREATLERKEESISKRQQQIEEKESKLAEMIQAEQTELERISALSKEEAKSIILNQVEEELTHDTAIMVKESENRAKEESDKKAKNILSLAIQRCAADHVAETTVSVVTLPNDEMKGRIIGREGRNIRTLETLTGIDLIIDDTPEAVILSGFDPIRREIARIALEKLVQDGRIHPARIEEMVDKARKEVDEHIREVGEQATFEVGIHSIHPDLIKILGRLRYRTSYGQNVLNHSLEVSKLAGILAGELGEDVTLAKRAGLLHDIGKAIDHEIEGSHVEIGVELATKYKENDVVINSIASHHGDTEATSVIAVLVAAADALSAARPGARSETLENYIRRLEKLEEISESYDGVEKSYAIQAGREVRIIVEPDTIDDLSSYRLARDIRKRIEEELDYPGHIKVTVIRETRAVEYAK.

The helical transmembrane segment at 5-25 (ITIISSLLFLIVGLVVGSLIF) threads the bilayer. Residues 76-127 (ELRGRRTETQKAENRLLQREENLDRKDTSLSKREATLERKEESISKRQQQIE) form a disordered region. Residues 210–273 (TVSVVTLPND…EIARIALEKL (64 aa)) enclose the KH domain. An HD domain is found at 336–429 (VLNHSLEVSK…VAAADALSAA (94 aa)).

The protein belongs to the RNase Y family.

It is found in the cell membrane. Its function is as follows. Endoribonuclease that initiates mRNA decay. The chain is Ribonuclease Y from Listeria monocytogenes serotype 1/2a (strain 10403S).